The chain runs to 146 residues: Protein phosphatase 1 regulatory subunit 14D (146 aa).

A compositionally biased stretch (polar residues) spans 1-16 (MLSSSAASCTSPNPDT). The disordered stretch occupies residues 1–57 (MLSSSAASCTSPNPDTDNPDKKVRWSSEKRRRASSTDSESKTHLDISKLPRSRRPSR). 2 stretches are compositionally biased toward basic and acidic residues: residues 18–28 (NPDKKVRWSSE) and 38–48 (SESKTHLDISK). The interval 21 to 25 (KKVRW) is interaction with protein phosphatase 1.

Belongs to the PP1 inhibitor family. In terms of processing, phosphorylated on several residues.

The protein resides in the cytoplasm. Inhibitor of PPP1CA. Has inhibitory activity only when phosphorylated, creating a molecular switch for regulating the phosphorylation status of PPP1CA substrates and smooth muscle contraction. This Rattus norvegicus (Rat) protein is Protein phosphatase 1 regulatory subunit 14D (Ppp1r14d).